A 515-amino-acid polypeptide reads, in one-letter code: 2-isopropylmalate synthase (515 aa).

Positions 5 to 267 (VIIFDTTLRD…HTGLDHKEIH (263 aa)) constitute a Pyruvate carboxyltransferase domain. The Mn(2+) site is built by aspartate 14, histidine 202, histidine 204, and asparagine 238. Residues 392-515 (KLNYLSVQSG…EMKQQKFATV (124 aa)) are regulatory domain.

The protein belongs to the alpha-IPM synthase/homocitrate synthase family. LeuA type 1 subfamily. Homodimer. Mn(2+) serves as cofactor.

It localises to the cytoplasm. The catalysed reaction is 3-methyl-2-oxobutanoate + acetyl-CoA + H2O = (2S)-2-isopropylmalate + CoA + H(+). Its pathway is amino-acid biosynthesis; L-leucine biosynthesis; L-leucine from 3-methyl-2-oxobutanoate: step 1/4. Catalyzes the condensation of the acetyl group of acetyl-CoA with 3-methyl-2-oxobutanoate (2-ketoisovalerate) to form 3-carboxy-3-hydroxy-4-methylpentanoate (2-isopropylmalate). The sequence is that of 2-isopropylmalate synthase from Vibrio atlanticus (strain LGP32) (Vibrio splendidus (strain Mel32)).